A 255-amino-acid polypeptide reads, in one-letter code: Mediator of RNA polymerase II transcription subunit 18 (255 aa).

This sequence belongs to the Mediator complex subunit 18 family. As to quaternary structure, component of the Mediator complex.

It localises to the nucleus. In terms of biological role, component of the Mediator complex, a coactivator involved in the regulated transcription of nearly all RNA polymerase II-dependent genes. Mediator functions as a bridge to convey information from gene-specific regulatory proteins to the basal RNA polymerase II transcription machinery. Mediator is recruited to promoters by direct interactions with regulatory proteins and serves as a scaffold for the assembly of a functional preinitiation complex with RNA polymerase II and the general transcription factors. The polypeptide is Mediator of RNA polymerase II transcription subunit 18 (SRB5) (Kluyveromyces lactis (strain ATCC 8585 / CBS 2359 / DSM 70799 / NBRC 1267 / NRRL Y-1140 / WM37) (Yeast)).